Reading from the N-terminus, the 325-residue chain is Siroheme decarboxylase NirDL subunit (325 aa).

It belongs to the Ahb/Nir family. As to quaternary structure, forms a complex composed of NirDL, NirG and NirH. All proteins are required for the total conversion of siroheme to didecarboxysiroheme.

The enzyme catalyses siroheme + 2 H(+) = 12,18-didecarboxysiroheme + 2 CO2. Its pathway is porphyrin-containing compound metabolism. Functionally, involved in heme d1 biosynthesis. Catalyzes the decarboxylation of siroheme into didecarboxysiroheme. This chain is Siroheme decarboxylase NirDL subunit, found in Paracoccus denitrificans (strain Pd 1222).